An 895-amino-acid polypeptide reads, in one-letter code: Endochitinase 2 (895 aa).

The first 22 residues, 1 to 22 (MGLTNILAAFIAVSSLFIQSLA), serve as a signal peptide directing secretion. The GH18 domain maps to 29 to 340 (SNLAVYWGQG…DIMKEVLLRC (312 aa)). Residue Asn-90 is glycosylated (N-linked (GlcNAc...) asparagine). Glu-175 acts as the Proton donor in catalysis. Residues 343-712 (DPPTSTVTST…APSSSTTEDR (370 aa)) are disordered. The segment covering 346-425 (TSTVTSTISA…ISTRSASTET (80 aa)) has biased composition (low complexity). Residues 426 to 478 (VTTRSQEPPSTTISTRPASTETVTTRSQEPPSSTISTRSASTETVTTRSQEPP) are compositionally biased toward polar residues. Low complexity predominate over residues 479–505 (SSTISTRSASTETSTSSQDSPSTTIST). Polar residues predominate over residues 506–543 (KSAPTGTVTTRSQDLPSTTISTRSPETETETVTTKSQD). The span at 544-555 (SPSITLSTRSSS) shows a compositional bias: low complexity. Residues 556-577 (AETVSTRSQHSSSTTISTKSAP) show a composition bias toward polar residues. The span at 578–589 (TETGTTSEHSTS) shows a compositional bias: low complexity. Over residues 590-657 (MPVSTRSAST…ISTELPSQTH (68 aa)) the composition is skewed to polar residues. Composition is skewed to low complexity over residues 658–692 (STTD…APTT) and 699–712 (TLTL…TEDR). Gly-866 is lipidated: GPI-anchor amidated glycine. Positions 867 to 895 (GAMTVRSMDVVAKALITAGAAVLGLFLGL) are cleaved as a propeptide — removed in mature form.

The protein belongs to the glycosyl hydrolase 18 family. Chitinase class III subfamily.

The protein localises to the cell membrane. It catalyses the reaction Random endo-hydrolysis of N-acetyl-beta-D-glucosaminide (1-&gt;4)-beta-linkages in chitin and chitodextrins.. May be associated with endosporulation. In Coccidioides immitis (strain RS) (Valley fever fungus), this protein is Endochitinase 2 (CTS2).